The sequence spans 212 residues: Urease accessory protein UreG (212 aa).

A GTP-binding site is contributed by 15 to 22 (GPVGSGKT).

Belongs to the SIMIBI class G3E GTPase family. UreG subfamily. In terms of assembly, homodimer. UreD, UreF and UreG form a complex that acts as a GTP-hydrolysis-dependent molecular chaperone, activating the urease apoprotein by helping to assemble the nickel containing metallocenter of UreC. The UreE protein probably delivers the nickel.

The protein resides in the cytoplasm. Functionally, facilitates the functional incorporation of the urease nickel metallocenter. This process requires GTP hydrolysis, probably effectuated by UreG. The chain is Urease accessory protein UreG from Opitutus terrae (strain DSM 11246 / JCM 15787 / PB90-1).